The chain runs to 191 residues: UPF0149 protein VV2847 (191 aa).

The protein belongs to the UPF0149 family.

In Vibrio vulnificus (strain YJ016), this protein is UPF0149 protein VV2847.